The following is a 429-amino-acid chain: Ribosomal RNA small subunit methyltransferase B (429 aa).

Residues 254–260, aspartate 277, aspartate 303, and aspartate 322 each bind S-adenosyl-L-methionine; that span reads CAAPGGK. Cysteine 375 serves as the catalytic Nucleophile.

Belongs to the class I-like SAM-binding methyltransferase superfamily. RsmB/NOP family.

Its subcellular location is the cytoplasm. It catalyses the reaction cytidine(967) in 16S rRNA + S-adenosyl-L-methionine = 5-methylcytidine(967) in 16S rRNA + S-adenosyl-L-homocysteine + H(+). Functionally, specifically methylates the cytosine at position 967 (m5C967) of 16S rRNA. The chain is Ribosomal RNA small subunit methyltransferase B from Serratia proteamaculans (strain 568).